Reading from the N-terminus, the 537-residue chain is 4-coumarate--CoA ligase (537 aa).

Residues Ser189, Ser190, Gly191, Thr192, Thr193, and Lys197 each coordinate ATP. (E)-4-coumaroyl-AMP is bound by residues Tyr239 and Ser243. CoA is bound at residue Lys260. Residues 262 to 331 (NLTTCLELIQ…ERFPKAIFGQ (70 aa)) are SBD1. (E)-4-coumaroyl-AMP-binding residues include Ala309, Gln331, Gly332, Thr336, and Met344. 3 residues coordinate ATP: Gln331, Gly332, and Thr336. Residues 332-399 (GYGMTEAGPV…IRGPEIMKGY (68 aa)) form an SBD2 region. ATP contacts are provided by Asp420 and Arg435. Residues Lys437 and Lys441 each contribute to the (E)-4-coumaroyl-AMP site. 2 residues coordinate CoA: Lys443 and Gly444. Lys524 lines the ATP pocket.

Belongs to the ATP-dependent AMP-binding enzyme family. The cofactor is Mg(2+).

It carries out the reaction (E)-4-coumarate + ATP + CoA = (E)-4-coumaroyl-CoA + AMP + diphosphate. It catalyses the reaction (E)-4-coumarate + ATP + H(+) = (E)-4-coumaroyl-AMP + diphosphate. The enzyme catalyses (E)-4-coumaroyl-AMP + CoA = (E)-4-coumaroyl-CoA + AMP + H(+). Its pathway is phytoalexin biosynthesis; 3,4',5-trihydroxystilbene biosynthesis; 3,4',5-trihydroxystilbene from trans-4-coumarate: step 1/2. In terms of biological role, carboxylate--CoA ligase that may use 4-coumarate as substrate. Follows a two-step reaction mechanism, wherein the carboxylate substrate first undergoes adenylation by ATP, followed by a thioesterification in the presence of CoA to yield the final CoA thioester. The polypeptide is 4-coumarate--CoA ligase (4CL) (Pinus taeda (Loblolly pine)).